The following is a 418-amino-acid chain: MAPTQGPRAPLEFGGPLGAAALLLLLPATMFHLLLAARSGPARLLGPPASLPGLEVLWSPRALLLWLAWLGLQAALYLLPARKVAEGQELKDKSRLRYPINGFQALVLTALLVGLGMSAGLPLGALPEMLLPLAFVATLTAFIFSLFLYMKAQVAPVSALAPGGNSGNPIYDFFLGRELNPRICFFDFKYFCELRPGLIGWVLINLALLMKEAELRGSPSLAMWLVNGFQLLYVGDALWHEEAVLTTMDITHDGFGFMLAFGDMAWVPFTYSLQAQFLLHHPQPLGLPMASVICLINATGYYIFRGANSQKNTFRKNPSDPRVAGLETISTATGRKLLVSGWWGMVRHPNYLGDLIMALAWSLPCGVSHLLPYFYLLYFTALLVHREARDERQCLQKYGLAWQEYCRRVPYRIMPYIY.

A run of 6 helical transmembrane segments spans residues 13–35 (FGGP…HLLL), 62–81 (ALLL…LLPA), 102–124 (GFQA…LPLG), 129–148 (MLLP…SLFL), 255–277 (FGFM…QAQF), and 287–304 (LPMA…YYIF). Residues Lys-311, Arg-315, Leu-338, Trp-343, and 350-351 (NY) contribute to the NADP(+) site. A helical transmembrane segment spans residues 355–377 (LIMALAWSLPCGVSHLLPYFYLL). Residues Asp-390, 394–398 (CLQKY), and Tyr-405 contribute to the NADP(+) site.

This sequence belongs to the ERG4/ERG24 family. Expressed in adult heart, brain, pancreas, lung, liver, skeletal muscle, kidney, ovary, prostate, testis and adrenal gland, but not detected in placenta, spleen, thymus, small intestine, colon (mucosal lining), or peripheral blood leukocytes.

Its subcellular location is the microsome membrane. The protein localises to the endoplasmic reticulum membrane. The enzyme catalyses 4,4-dimethyl-5alpha-cholesta-8,24-dien-3beta-ol + NADP(+) = 4,4-dimethyl-5alpha-cholesta-8,14,24-trien-3beta-ol + NADPH + H(+). It carries out the reaction 5alpha-cholest-8,14-dien-3beta-ol + NADPH + H(+) = 5alpha-cholest-8-en-3beta-ol + NADP(+). The catalysed reaction is 4,4-dimethyl-8,14-cholestadien-3beta-ol + NADPH + H(+) = 4,4-dimethyl-5alpha-cholest-8-en-3beta-ol + NADP(+). It functions in the pathway steroid biosynthesis; cholesterol biosynthesis. Catalyzes the reduction of the C14-unsaturated bond of lanosterol, as part of the metabolic pathway leading to cholesterol biosynthesis. This chain is Delta(14)-sterol reductase TM7SF2 (TM7SF2), found in Homo sapiens (Human).